A 371-amino-acid polypeptide reads, in one-letter code: tRNA-specific 2-thiouridylase MnmA (371 aa).

ATP is bound by residues 13–20 (GMSGGVDS) and methionine 39. The segment at 99–101 (NPD) is interaction with target base in tRNA. Cysteine 104 (nucleophile) is an active-site residue. Cysteine 104 and cysteine 200 are joined by a disulfide. Position 128 (glycine 128) interacts with ATP. The segment at 150-152 (KDQ) is interaction with tRNA. Cysteine 200 acts as the Cysteine persulfide intermediate in catalysis. Positions 308 to 309 (RY) are interaction with tRNA.

This sequence belongs to the MnmA/TRMU family.

Its subcellular location is the cytoplasm. The enzyme catalyses S-sulfanyl-L-cysteinyl-[protein] + uridine(34) in tRNA + AH2 + ATP = 2-thiouridine(34) in tRNA + L-cysteinyl-[protein] + A + AMP + diphosphate + H(+). Catalyzes the 2-thiolation of uridine at the wobble position (U34) of tRNA, leading to the formation of s(2)U34. This is tRNA-specific 2-thiouridylase MnmA from Listeria innocua serovar 6a (strain ATCC BAA-680 / CLIP 11262).